The primary structure comprises 358 residues: tRNA-specific 2-thiouridylase MnmA (358 aa).

Residues 10–17 (AMSGGVDS) and Met36 contribute to the ATP site. Cys105 acts as the Nucleophile in catalysis. The cysteines at positions 105 and 202 are disulfide-linked. Gly129 is a binding site for ATP. Positions 152–154 (KDQ) are interaction with tRNA. The active-site Cysteine persulfide intermediate is Cys202. Residues 308 to 309 (RY) form an interaction with tRNA region.

It belongs to the MnmA/TRMU family.

The protein localises to the cytoplasm. The catalysed reaction is S-sulfanyl-L-cysteinyl-[protein] + uridine(34) in tRNA + AH2 + ATP = 2-thiouridine(34) in tRNA + L-cysteinyl-[protein] + A + AMP + diphosphate + H(+). In terms of biological role, catalyzes the 2-thiolation of uridine at the wobble position (U34) of tRNA, leading to the formation of s(2)U34. The polypeptide is tRNA-specific 2-thiouridylase MnmA (Magnetococcus marinus (strain ATCC BAA-1437 / JCM 17883 / MC-1)).